Reading from the N-terminus, the 247-residue chain is MTATATEGAKPPFVSRSVLVTGGNRGIGLAIAQRLAADGHKVAVTHRGSGAPKGLFGVECDVTDSDAVDRAFTAVEEHQGPVEVLVSNAGLSADAFLMRMTEEKFEKVINANLTGAFRVAQRASRSMQRNKFGRMIFIGSVSGSWGIGNQANYAASKAGVIGMARSIARELSKANVTANVVAPGYIDTDMTRALDERIQQGALQFIPAKRVGTPAEVAGVVSFLASEDASYISGAVIPVDGGMGMGH.

NADP(+)-binding positions include 25-27, R47, 61-62, G90, Y153, K157, I186, and R197; these read RGI and DV. The Proton acceptor role is filled by Y153.

It belongs to the short-chain dehydrogenases/reductases (SDR) family. In terms of assembly, homotetramer.

It localises to the secreted. The protein resides in the cell wall. The catalysed reaction is a (3R)-hydroxyacyl-[ACP] + NADP(+) = a 3-oxoacyl-[ACP] + NADPH + H(+). It participates in lipid metabolism; mycolic acid biosynthesis. Part of the mycobacterial fatty acid elongation system FAS-II, which is involved in mycolic acid biosynthesis. Catalyzes the NADPH-dependent reduction of beta-ketoacyl derivatives, the second step of the FAS-II elongation cycle. The sequence is that of 3-oxoacyl-[acyl-carrier-protein] reductase MabA from Mycobacterium bovis (strain ATCC BAA-935 / AF2122/97).